The sequence spans 133 residues: Nucleoside diphosphate kinase (133 aa).

ATP-binding residues include lysine 9, phenylalanine 57, arginine 85, threonine 91, arginine 102, and asparagine 112. Residue histidine 115 is the Pros-phosphohistidine intermediate of the active site.

Belongs to the NDK family. Homotetramer. It depends on Mg(2+) as a cofactor.

It localises to the cytoplasm. It carries out the reaction a 2'-deoxyribonucleoside 5'-diphosphate + ATP = a 2'-deoxyribonucleoside 5'-triphosphate + ADP. The catalysed reaction is a ribonucleoside 5'-diphosphate + ATP = a ribonucleoside 5'-triphosphate + ADP. In terms of biological role, major role in the synthesis of nucleoside triphosphates other than ATP. The ATP gamma phosphate is transferred to the NDP beta phosphate via a ping-pong mechanism, using a phosphorylated active-site intermediate. The chain is Nucleoside diphosphate kinase from Rubrobacter xylanophilus (strain DSM 9941 / JCM 11954 / NBRC 16129 / PRD-1).